We begin with the raw amino-acid sequence, 170 residues long: Thialysine N-epsilon-acetyltransferase (170 aa).

The 163-residue stretch at 4–166 (TRIREARESD…FRFEGEAMRE (163 aa)) folds into the N-acetyltransferase domain. 27 to 28 (FE) serves as a coordination point for substrate. Lys-29 carries the N6-acetyllysine modification. Glu-92 contacts substrate. Residues 94–96 (IYV), 102–107 (GQGIGT), 133–135 (NKK), and Tyr-140 contribute to the acetyl-CoA site. The Proton donor role is filled by Tyr-140. Glu-152 is a substrate binding site.

This sequence belongs to the acetyltransferase family. As to quaternary structure, homodimer.

Its subcellular location is the cytoplasm. The catalysed reaction is S-(2-aminoethyl)-L-cysteine + acetyl-CoA = S-(2-acetamidoethyl)-L-cysteine + CoA + H(+). It carries out the reaction an alkane-alpha,omega-diamine + acetyl-CoA = an N-acetylalkane-alpha,omega-diamine + CoA + H(+). Catalyzes the N-acetylation of the amino acid thialysine (S-(2-aminoethyl)-L-cysteine), a L-lysine analog with the 4-methylene group substituted with a sulfur. May also catalyze acetylation of polyamines, such as norspermidine, spermidine or spermine. However, ability to acetylate polyamines is weak, suggesting that it does not act as a diamine acetyltransferase in vivo. This chain is Thialysine N-epsilon-acetyltransferase, found in Mus musculus (Mouse).